The primary structure comprises 364 residues: Chorismate synthase (364 aa).

A disordered region spans residues 41 to 60 (MQHDLDRRRPGTSRYTTARR). Positions 48 and 54 each coordinate NADP(+). FMN contacts are provided by residues 125–127 (RSS), 238–239 (NA), Gly-278, 293–297 (KPTSS), and Arg-319.

Belongs to the chorismate synthase family. Homotetramer. Requires FMNH2 as cofactor.

The catalysed reaction is 5-O-(1-carboxyvinyl)-3-phosphoshikimate = chorismate + phosphate. It functions in the pathway metabolic intermediate biosynthesis; chorismate biosynthesis; chorismate from D-erythrose 4-phosphate and phosphoenolpyruvate: step 7/7. In terms of biological role, catalyzes the anti-1,4-elimination of the C-3 phosphate and the C-6 proR hydrogen from 5-enolpyruvylshikimate-3-phosphate (EPSP) to yield chorismate, which is the branch point compound that serves as the starting substrate for the three terminal pathways of aromatic amino acid biosynthesis. This reaction introduces a second double bond into the aromatic ring system. The protein is Chorismate synthase of Shewanella sp. (strain ANA-3).